The following is a 38-amino-acid chain: Potassium channel toxin alpha-KTx 2.15 (38 aa).

Cystine bridges form between Cys7-Cys29, Cys13-Cys34, and Cys17-Cys36.

The protein belongs to the short scorpion toxin superfamily. Potassium channel inhibitor family. Alpha-KTx 02 subfamily. In terms of tissue distribution, expressed by the venom gland.

It is found in the secreted. In terms of biological role, blocks human voltage-gated potassium channels Kv1.2/KCNA2 (IC(50)=0.3 nM), Kv1.3/KCNA3 (IC(50)=8.3 nM) and Shaker IR (with inactivation domain removed) (IC(50)=12 nM) and blocks intermediate conductance calcium-activated potassium channel KCa3.1/KCNN4 (IC(50)=6.4 nM). This chain is Potassium channel toxin alpha-KTx 2.15, found in Centruroides tecomanus (Scorpion).